A 1940-amino-acid chain; its full sequence is Rho GTPase-activating protein 32 (1940 aa).

Positions 154-248 (SKELVFLVQI…LTWMEIDNKG (95 aa)) constitute a PX; atypical domain. The 63-residue stretch at 262–324 (PAIAAAHVIK…PSECVELIND (63 aa)) folds into the SH3 domain. Residues 375–570 (CDLGEHLLNS…FILNHVEVLF (196 aa)) form the Rho-GAP domain. Disordered stretches follow at residues 646 to 746 (FPSE…LSAS), 1035 to 1163 (RANQ…FSVT), 1219 to 1264 (FTTG…PPVR), 1430 to 1454 (KHPR…YTED), and 1675 to 1786 (RSRS…HSSA). Over residues 1047–1061 (PQGASASESPQELSH) the composition is skewed to polar residues. Low complexity-rich tracts occupy residues 1081–1094 (LALA…QASA) and 1145–1163 (SRKT…FSVT). The segment covering 1691-1707 (ETKDVRYPGRTEGDERT) has biased composition (basic and acidic residues). A compositionally biased stretch (polar residues) spans 1725-1734 (PQKQSGSSRS). The segment covering 1736 to 1755 (MQHDISTEQHSQDTLHRQPS) has biased composition (basic and acidic residues).

This sequence belongs to the PX domain-containing GAP family.

It localises to the cytoplasm. Its subcellular location is the membrane. The protein resides in the cell membrane. In terms of biological role, GTPase-activating protein (GAP) promoting GTP hydrolysis on RHOA, CDC42 and RAC1 small GTPases. This chain is Rho GTPase-activating protein 32 (arhgap32), found in Xenopus laevis (African clawed frog).